The sequence spans 90 residues: U7-theraphotoxin-Hhn1g (90 aa).

The first 19 residues, 1-19 (MKTAIFTVVLALAVFAVLS), serve as a signal peptide directing secretion. Residues 20 to 50 (FGWEANEKALSEEFTELIHEKEAASETEARE) constitute a propeptide that is removed on maturation. 3 cysteine pairs are disulfide-bonded: cysteine 51/cysteine 65, cysteine 58/cysteine 70, and cysteine 64/cysteine 81.

Belongs to the neurotoxin 10 (Hwtx-1) family. 13 (Hntx-13) subfamily. In terms of tissue distribution, expressed by the venom gland.

Its subcellular location is the secreted. Ion channel inhibitor. The chain is U7-theraphotoxin-Hhn1g from Cyriopagopus hainanus (Chinese bird spider).